The sequence spans 576 residues: Gamma-aminobutyric acid receptor subunit beta (576 aa).

A signal peptide spans 1-29 (MSDSMLYQTLQTCLPKSRLITLWLAFTLA). Over 30 to 268 (MLIQEPRRHA…IQFVRSMGYY (239 aa)) the chain is Extracellular. A glycan (N-linked (GlcNAc...) asparagine) is linked at Asn56. A disulfide bond links Cys183 and Cys197. A glycan (N-linked (GlcNAc...) asparagine) is linked at Asn251. The next 3 membrane-spanning stretches (helical) occupy residues 269-289 (LIQI…SFWL), 298-320 (VALG…AALP), and 330-350 (VYLG…ATVG). The Cytoplasmic portion of the chain corresponds to 351–540 (YMAKRIQMRK…TPSDIDKYSR (190 aa)). 2 disordered regions span residues 372 to 418 (QKKQ…QTVS) and 452 to 507 (HDPK…GDAE). The span at 398–412 (HGHGHGHHSHGHPHV) shows a compositional bias: basic residues. Residues 475 to 490 (PVGPHGPGPQGPPGGP) are compositionally biased toward pro residues. The span at 491–501 (PAGGGGGGAPP) shows a compositional bias: gly residues. The helical transmembrane segment at 541–561 (IVFPVCFVCFNLMYWIIYLHV) threads the bilayer.

This sequence belongs to the ligand-gated ion channel (TC 1.A.9) family. Gamma-aminobutyric acid receptor (TC 1.A.9.5) subfamily. Homomultimer.

The protein resides in the postsynaptic cell membrane. It localises to the cell membrane. In terms of biological role, GABA, an inhibitory neurotransmitter, mediates neuronal inhibition by binding to the GABA receptor and opening an integral chloride channel. The polypeptide is Gamma-aminobutyric acid receptor subunit beta (Musca domestica (House fly)).